Here is a 1123-residue protein sequence, read N- to C-terminus: Mediator of RNA polymerase II transcription subunit 14 (1123 aa).

The interval 450–484 is disordered; that stretch reads KQSDASDEQQNNIEPNEESLEDLREDNNEDESEPQ.

This sequence belongs to the Mediator complex subunit 14 family. As to quaternary structure, component of the Mediator complex.

Its subcellular location is the nucleus. Its function is as follows. Component of the Mediator complex, a coactivator involved in the regulated transcription of nearly all RNA polymerase II-dependent genes. Mediator functions as a bridge to convey information from gene-specific regulatory proteins to the basal RNA polymerase II transcription machinery. Mediator is recruited to promoters by direct interactions with regulatory proteins and serves as a scaffold for the assembly of a functional preinitiation complex with RNA polymerase II and the general transcription factors. The chain is Mediator of RNA polymerase II transcription subunit 14 (RGR1) from Debaryomyces hansenii (strain ATCC 36239 / CBS 767 / BCRC 21394 / JCM 1990 / NBRC 0083 / IGC 2968) (Yeast).